The chain runs to 148 residues: 3-dehydroquinate dehydratase (148 aa).

Tyr23 functions as the Proton acceptor in the catalytic mechanism. Substrate-binding residues include Asn74, His80, and Asp87. His100 functions as the Proton donor in the catalytic mechanism. Residues 101–102 (IS) and Arg111 contribute to the substrate site.

This sequence belongs to the type-II 3-dehydroquinase family. In terms of assembly, homododecamer.

The catalysed reaction is 3-dehydroquinate = 3-dehydroshikimate + H2O. It participates in metabolic intermediate biosynthesis; chorismate biosynthesis; chorismate from D-erythrose 4-phosphate and phosphoenolpyruvate: step 3/7. Functionally, catalyzes a trans-dehydration via an enolate intermediate. The protein is 3-dehydroquinate dehydratase of Caldanaerobacter subterraneus subsp. tengcongensis (strain DSM 15242 / JCM 11007 / NBRC 100824 / MB4) (Thermoanaerobacter tengcongensis).